Consider the following 90-residue polypeptide: uncharacterized protein (90 aa).

The protein localises to the cytoplasm. This is an uncharacterized protein from Saccharomyces cerevisiae (strain ATCC 204508 / S288c) (Baker's yeast).